Here is a 332-residue protein sequence, read N- to C-terminus: GTP 3',8-cyclase (332 aa).

The 215-residue stretch at 7-221 (SYDRLHDYVR…FDTCKDNGLA (215 aa)) folds into the Radical SAM core domain. GTP is bound at residue Arg-16. [4Fe-4S] cluster-binding residues include Cys-23 and Cys-27. Residue Tyr-29 participates in S-adenosyl-L-methionine binding. Cys-30 contacts [4Fe-4S] cluster. Arg-66 provides a ligand contact to GTP. An S-adenosyl-L-methionine-binding site is contributed by Gly-70. Thr-97 lines the GTP pocket. Ser-121 serves as a coordination point for S-adenosyl-L-methionine. Lys-158 lines the GTP pocket. Met-192 contacts S-adenosyl-L-methionine. The [4Fe-4S] cluster site is built by Cys-256 and Cys-259. 261-263 (RLR) provides a ligand contact to GTP. Cys-273 provides a ligand contact to [4Fe-4S] cluster.

It belongs to the radical SAM superfamily. MoaA family. As to quaternary structure, monomer and homodimer. The cofactor is [4Fe-4S] cluster.

It carries out the reaction GTP + AH2 + S-adenosyl-L-methionine = (8S)-3',8-cyclo-7,8-dihydroguanosine 5'-triphosphate + 5'-deoxyadenosine + L-methionine + A + H(+). The protein operates within cofactor biosynthesis; molybdopterin biosynthesis. In terms of biological role, catalyzes the cyclization of GTP to (8S)-3',8-cyclo-7,8-dihydroguanosine 5'-triphosphate. The protein is GTP 3',8-cyclase of Lactiplantibacillus plantarum (strain ATCC BAA-793 / NCIMB 8826 / WCFS1) (Lactobacillus plantarum).